The following is a 207-amino-acid chain: Fibroblast growth factor 18 (207 aa).

The first 27 residues, Met1–Ala27, serve as a signal peptide directing secretion. A glycan (N-linked (GlcNAc...) asparagine) is linked at Asn39. Cys109 and Cys127 are disulfide-bonded. Asn137 carries N-linked (GlcNAc...) asparagine glycosylation. A disordered region spans residues Gly157–Thr183. The segment covering Lys164–Phe174 has biased composition (basic and acidic residues).

The protein belongs to the heparin-binding growth factors family. As to quaternary structure, interacts with FGFR3 and FGFR4. As to expression, mainly expressed in the lung. Not detected in brain, heart, liver, kidney and small intestine.

The protein resides in the secreted. In terms of biological role, plays an important role in the regulation of cell proliferation, cell differentiation and cell migration. Required for normal ossification and bone development. Stimulates hepatic and intestinal proliferation. This chain is Fibroblast growth factor 18 (Fgf18), found in Rattus norvegicus (Rat).